Reading from the N-terminus, the 399-residue chain is Transmembrane protein 237 homolog (399 aa).

A compositionally biased stretch (pro residues) spans 1 to 11; sequence MPPTSRPVPPP. Residues 1–158 are disordered; it reads MPPTSRPVPP…PHDKRNMPAK (158 aa). Composition is skewed to basic and acidic residues over residues 36-45, 111-135, and 144-158; these read NQQRRFRENN, EAAKHSREDPSGETVEVRRPNDPRR, and KSFRDPHDKRNMPAK. 4 helical membrane-spanning segments follow: residues 222 to 242, 256 to 276, 301 to 321, and 343 to 363; these read IANIIQGFLAGISVMLAIFSF, MSLPIHAGFMVAFTVGLVSAI, GLITFIVWFVGLVSTLLCIQL, and VFNVLRALTSGLGFLLLAFKP.

It belongs to the TMEM237 family.

The protein localises to the membrane. It is found in the cell projection. Its subcellular location is the cilium. Its function is as follows. Component of the transition zone in primary cilia. Required for ciliogenesis. This Caenorhabditis elegans protein is Transmembrane protein 237 homolog.